A 622-amino-acid chain; its full sequence is Low affinity potassium transport system protein Kup (622 aa).

Helical transmembrane passes span 9–29 (LPAI…TSPL), 49–69 (VFGF…IKYL), 103–123 (VIMG…TPAI), 137–157 (PQLD…LFMI), 165–185 (VGKL…GLGL), 213–233 (VSFI…ALYA), 247–267 (WFTV…ALLL), 276–296 (PFFL…AALA), 337–357 (IYIP…IVSF), 363–383 (LAAA…ILST), 396–416 (FVAL…TANL), and 419–439 (LLSG…VMTT).

It belongs to the HAK/KUP transporter (TC 2.A.72) family.

The protein localises to the cell inner membrane. The catalysed reaction is K(+)(in) + H(+)(in) = K(+)(out) + H(+)(out). Functionally, responsible for the low-affinity transport of potassium into the cell. Likely operates as a K(+):H(+) symporter. This chain is Low affinity potassium transport system protein Kup, found in Escherichia coli (strain K12 / MC4100 / BW2952).